The following is a 209-amino-acid chain: Probable GTP-binding protein EngB (209 aa).

One can recognise an EngB-type G domain in the interval 24–198 (EGMEVAFAGR…HGILDQWLGL (175 aa)). GTP is bound by residues 32-39 (GRSNAGKS), 59-63 (GRTQL), 77-80 (DLPG), 144-147 (TKAD), and 177-179 (FSA). Ser-39 and Thr-61 together coordinate Mg(2+).

It belongs to the TRAFAC class TrmE-Era-EngA-EngB-Septin-like GTPase superfamily. EngB GTPase family. It depends on Mg(2+) as a cofactor.

In terms of biological role, necessary for normal cell division and for the maintenance of normal septation. In Thioalkalivibrio sulfidiphilus (strain HL-EbGR7), this protein is Probable GTP-binding protein EngB.